A 996-amino-acid chain; its full sequence is Disabled homolog 2-interacting protein (996 aa).

Residues 1-118 form the C2 domain; the sequence is MENLRRAVHP…AGRQFVEKWY (118 aa). One can recognise a Ras-GAP domain in the interval 194–402; that stretch reads GKVKDFLTDL…TNMQRFLLEI (209 aa). Positions 453 to 750 are necessary for interaction with AKT1; that stretch reads LRDVHTALST…RTPPTMLSTL (298 aa). A compositionally biased stretch (polar residues) spans 460 to 475; sequence LSTPGSGQLPGTNDLA. Disordered stretches follow at residues 460 to 486 and 522 to 545; these read LSTP…SSVS and RSSG…PDLQ. A compositionally biased stretch (low complexity) spans 476-486; that stretch reads STPGSGSSSVS. Over residues 522–538 the composition is skewed to polar residues; the sequence is RSSGVQPSPARSSSYSE. At Ser-535 the chain carries Phosphoserine; by MAP3K5 and RIPK1. Ser-554 carries the post-translational modification Phosphoserine. 5 disordered regions span residues 611-630, 650-672, 702-805, 822-841, and 971-996; these read VPTP…PQLL, PRGL…NSEE, SLTE…SPNA, EDEG…SKEE, and RNGV…SSNC. Residues 659-672 are compositionally biased toward low complexity; sequence EGHSSLSSHSNSEE. Residues 726 to 738 show a composition bias toward pro residues; sequence QPPPPPPPPPPAP. Composition is skewed to polar residues over residues 746–762 and 774–783; these read MLST…TLAS and LRQQSSSSKG. Phosphoserine is present on residues Ser-785 and Ser-802. Residues 830 to 841 show a composition bias toward basic and acidic residues; sequence PPHRDRLRSKEE. A coiled-coil region spans residues 832 to 966; the sequence is HRDRLRSKEE…SALTQLKERY (135 aa). Over residues 974–996 the composition is skewed to polar residues; sequence VSPTNPTKLQITENGEFRNSSNC.

As to quaternary structure, on plasma membrane, exists in an inactive form complexed with TNFR1; in response to TNF-alpha, dissociates from TNFR1 complex, translocates to cytoplasm and forms part of an intracellular signaling complex comprising TRADD, RIPK1, TRAF2 and MAP3K5. Interacts (via NPXY motif) with DAB2 (via PID domain). Interacts (via PH domain) with ERN1. Part of a cytoplasmic complex made of HIPK1, DAB2IP and MAP3K5 in response to TNF-alpha; this complex formation promotes MAP3K5-JNK activation and subsequent apoptosis. Interacts (via N-terminal domain) with JAK2; the interaction occurs in a IFNG/IFN-gamma-dependent manner and inhibits JAK2 autophosphorylation activity. Interacts (via C2 domain) with GSK3B; the interaction stimulates GSK3B kinase activation. Interacts (via C2 domain) with PPP2CA. Interacts (via proline-rich motif) with a regulatory p85 subunit (via SH3 domain) of the PI3K complex; the interaction inhibits the PI3K-AKT complex activity in a TNF-alpha-dependent manner in prostate cancer (PCa) cells. Interacts with AKT1; the interaction is increased in a TNF-alpha-induced manner. Interacts (via C2 domain and active form preferentially) with KDR/VEGFR2 (tyrosine-phosphorylated active form preferentially); the interaction occurs at the late phase of VEGFA response and inhibits KDR/VEGFR2 activity. Interacts (via N-terminus C2 domain) with MAP3K5 ('Ser-966' dephosphorylated form preferentially); the interaction occurs in a TNF-alpha-induced manner. Interacts (via Ras-GAP domain) with the catalytic subunit of protein phosphatase PP2A; the interaction occurs in resting endothelial cells, is further enhanced by TNF-alpha stimulation and is required to bridge PP2A to MAP3K5. Interacts (via C-terminus PER domain) with TRAF2 (via zinc fingers); the interaction occurs in a TNF-alpha-dependent manner. Interacts with 14-3-3 proteins; the interaction occurs in a TNF-alpha-dependent manner. Interacts (via Ras-GAP domain) with RIPK1 (via kinase domain); the interaction occurs in a TNF-alpha-dependent manner. Interacts with DAB1 and DAB2. Interacts with RAB40C; acts as a GAP for RAB40C. Post-translationally, in response to TNF-alpha-induction, phosphorylated at Ser-535; phosphorylation leads to a conformational change, and thus, increases its association with 14-3-3 proteins, MAP3K5, RIPK1 and TRAF2 in endothelial cells; also stimulates regulatory p85 subunit sequestring and PI3K-p85 complex activity inhibition. In terms of tissue distribution, expressed in brain, lung, thymus, bladder and skeletal muscle. Up-regulatedd during prostate degeneration.

It is found in the cytoplasm. The protein localises to the cell membrane. It localises to the membrane. The protein resides in the cell projection. Its subcellular location is the dendrite. Functions as a scaffold protein implicated in the regulation of a large spectrum of both general and specialized signaling pathways. Involved in several processes such as innate immune response, inflammation and cell growth inhibition, apoptosis, cell survival, angiogenesis, cell migration and maturation. Also plays a role in cell cycle checkpoint control; reduces G1 phase cyclin levels resulting in G0/G1 cell cycle arrest. Mediates signal transduction by receptor-mediated inflammatory signals, such as the tumor necrosis factor (TNF), interferon (IFN) or lipopolysaccharide (LPS). Modulates the balance between phosphatidylinositol 3-kinase (PI3K)-AKT-mediated cell survival and apoptosis stimulated kinase (MAP3K5)-JNK signaling pathways; sequesters both AKT1 and MAP3K5 and counterbalances the activity of each kinase by modulating their phosphorylation status in response to pro-inflammatory stimuli. Acts as a regulator of the endoplasmic reticulum (ER) unfolded protein response (UPR) pathway; specifically involved in transduction of the ER stress-response to the JNK cascade through ERN1. Mediates TNF-alpha-induced apoptosis activation by facilitating dissociation of inhibitor 14-3-3 from MAP3K5; recruits the PP2A phosphatase complex which dephosphorylates MAP3K5 on 'Ser-966', leading to the dissociation of 13-3-3 proteins and activation of the MAP3K5-JNK signaling pathway in endothelial cells. Acts a negative regulator in the IFN-gamma-mediated JAK-STAT signaling cascade by inhibiting smooth muscle cell (VSMCs) proliferation and intimal expansion, and thus, prevents graft arteriosclerosis (GA). Acts as a GTPase-activating protein (GAP) for the ADP ribosylation factor 6 (ARF6). Promotes hydrolysis of the ARF6-bound GTP and thus, negatively regulates phosphatidylinositol 4,5-bisphosphate (PIP2)-dependent TLR4-TIRAP-MyD88 and NF-kappa-B signaling pathways in endothelial cells in response to lipopolysaccharides (LPS). Binds specifically to phosphatidylinositol 4-phosphate (PtdIns4P) and phosphatidylinositol 3-phosphate (PtdIns3P). In response to vascular endothelial growth factor (VEGFA), acts as a negative regulator of the VEGFR2-PI3K-mediated angiogenic signaling pathway by inhibiting endothelial cell migration and tube formation. In the developing brain, promotes both the transition from the multipolar to the bipolar stage and the radial migration of cortical neurons from the ventricular zone toward the superficial layer of the neocortex in a glial-dependent locomotion process. Probable downstream effector of the Reelin signaling pathway; promotes Purkinje cell (PC) dendrites development and formation of cerebellar synapses. Also functions as a tumor suppressor protein in prostate cancer progression; prevents cell proliferation and epithelial-to-mesenchymal transition (EMT) through activation of the glycogen synthase kinase-3 beta (GSK3B)-induced beta-catenin and inhibition of PI3K-AKT and Ras-MAPK survival downstream signaling cascades, respectively. Mediates TNF/TRAF2-induced MAP3K5-JNK activation, while it inhibits CHUK-NF-kappa-B signaling. Functions as a Ras GTPase-activating protein. May act as a tumor suppressor gene. In Rattus norvegicus (Rat), this protein is Disabled homolog 2-interacting protein (Dab2ip).